The sequence spans 271 residues: NH(3)-dependent NAD(+) synthetase (271 aa).

Residue 43–50 (GISGGQDS) coordinates ATP. Residue Asp-49 coordinates Mg(2+). Residue Arg-136 participates in deamido-NAD(+) binding. An ATP-binding site is contributed by Thr-156. Glu-161 serves as a coordination point for Mg(2+). 2 residues coordinate deamido-NAD(+): Lys-169 and Asp-176. The ATP site is built by Lys-185 and Thr-207. 256 to 257 (HK) is a deamido-NAD(+) binding site.

It belongs to the NAD synthetase family. In terms of assembly, homodimer.

It carries out the reaction deamido-NAD(+) + NH4(+) + ATP = AMP + diphosphate + NAD(+) + H(+). It participates in cofactor biosynthesis; NAD(+) biosynthesis; NAD(+) from deamido-NAD(+) (ammonia route): step 1/1. Catalyzes the ATP-dependent amidation of deamido-NAD to form NAD. Uses ammonia as a nitrogen source. The protein is NH(3)-dependent NAD(+) synthetase of Tropheryma whipplei (strain TW08/27) (Whipple's bacillus).